The sequence spans 555 residues: GPI-anchor transamidase component PIGS (555 aa).

The Cytoplasmic segment spans residues 2–18 (AAAGAAATHLEVARGKR). Arginine 15 and arginine 18 together coordinate a cardiolipin. A helical transmembrane segment spans residues 19–39 (AALFFAAVAIVLGLPLWWKTT). Residues 40-517 (ETYRASLPYS…LHLLYFPDDQ (478 aa)) are Lumenal-facing. N-linked (GlcNAc...) asparagine glycosylation is found at asparagine 267 and asparagine 370. The chain crosses the membrane as a helical span at residues 518–532 (KFAIYIPLFLPMAVP). Residues 533–555 (ILLSLVKIFLETRKSWRKPEKTD) lie on the Cytoplasmic side of the membrane.

The protein belongs to the PIGS family. As to quaternary structure, heteropentamer. Part of the GPI-anchor transamidase complex, consisting of PIGK, PIGT, PIGS, PIGU and GAA1.

It is found in the endoplasmic reticulum membrane. It participates in glycolipid biosynthesis; glycosylphosphatidylinositol-anchor biosynthesis. Its function is as follows. Component of the glycosylphosphatidylinositol-anchor (GPI-anchor) transamidase (GPI-T) complex that catalyzes the formation of the linkage between a proprotein and a GPI-anchor and participates in GPI anchored protein biosynthesis. The protein is GPI-anchor transamidase component PIGS of Homo sapiens (Human).